The primary structure comprises 980 residues: Protein translocase subunit SecA (980 aa).

ATP contacts are provided by residues glutamine 109, 127–131 (GEGKT), and aspartate 529. Residues 954–980 (QKIGRNDPCPCGSGKKYKHCHGKDNPQ) form a disordered region. Residues cysteine 962, cysteine 964, cysteine 973, and histidine 974 each contribute to the Zn(2+) site.

It belongs to the SecA family. Monomer and homodimer. Part of the essential Sec protein translocation apparatus which comprises SecA, SecYEG and auxiliary proteins SecDF. Other proteins may also be involved. It depends on Zn(2+) as a cofactor.

Its subcellular location is the cell inner membrane. It is found in the cytoplasm. It carries out the reaction ATP + H2O + cellular proteinSide 1 = ADP + phosphate + cellular proteinSide 2.. Its function is as follows. Part of the Sec protein translocase complex. Interacts with the SecYEG preprotein conducting channel. Has a central role in coupling the hydrolysis of ATP to the transfer of proteins into and across the cell membrane, serving as an ATP-driven molecular motor driving the stepwise translocation of polypeptide chains across the membrane. The polypeptide is Protein translocase subunit SecA (Brachyspira hyodysenteriae (strain ATCC 49526 / WA1)).